The chain runs to 412 residues: Inactive serine protease 35 (412 aa).

The N-terminal stretch at 1–23 is a signal peptide; sequence MGAMFFGLMLFTLGWTLIDGSES. Residue N110 is glycosylated (N-linked (GlcNAc...) asparagine). The Peptidase S1 domain occupies 124 to 407; sequence VYGTDSRFSI…ICLWMHGDDA (284 aa). Cysteines 154 and 170 form a disulfide. The segment covering 192–207 has biased composition (basic residues); that stretch reads RNKGGGKRRRGSRRNR. The segment at 192 to 246 is disordered; the sequence is RNKGGGKRRRGSRRNRREVSGAGREGSQDSLKETAKAGRRRKGSARRQRAADGRP. A compositionally biased stretch (basic and acidic residues) spans 217 to 227; it reads GSQDSLKETAK. Residues 228–239 show a composition bias toward basic residues; that stretch reads AGRRRKGSARRQ.

Belongs to the peptidase S1 family.

It localises to the secreted. This is Inactive serine protease 35 (PRSS35) from Bos taurus (Bovine).